The following is a 438-amino-acid chain: Tyrosine--tRNA ligase (438 aa).

Y47 lines the L-tyrosine pocket. The 'HIGH' region motif lies at P52 to G61. L-tyrosine is bound by residues Y183 and Q187. A 'KMSKS' region motif is present at residues K243–T247. ATP is bound at residue K246. One can recognise an S4 RNA-binding domain in the interval L370–I436.

The protein belongs to the class-I aminoacyl-tRNA synthetase family. TyrS type 1 subfamily. Homodimer.

Its subcellular location is the cytoplasm. It carries out the reaction tRNA(Tyr) + L-tyrosine + ATP = L-tyrosyl-tRNA(Tyr) + AMP + diphosphate + H(+). Its function is as follows. Catalyzes the attachment of tyrosine to tRNA(Tyr) in a two-step reaction: tyrosine is first activated by ATP to form Tyr-AMP and then transferred to the acceptor end of tRNA(Tyr). This chain is Tyrosine--tRNA ligase, found in Rhodopirellula baltica (strain DSM 10527 / NCIMB 13988 / SH1).